Consider the following 2242-residue polypeptide: DEP domain-containing protein DDB_G0279099 (2242 aa).

Disordered stretches follow at residues 388-465 (SQNT…SNNS), 576-644 (DSNA…YSRV), 701-730 (PILR…FDQK), 871-965 (DPTT…TKKS), 1077-1194 (QLQL…AFNS), 1287-1336 (GSQQ…MNGS), 1384-1414 (SELL…ALPE), 1446-1471 (AQSS…NTSG), and 1502-1521 (SNNN…NSLN). Positions 392–440 (IQNNNNNNNNNNNNNNNNNNNNNNNNNNNNNNNNNNNNNSNNNKNNQNN) form a coiled coil. The segment covering 581–614 (GGNNNNNYNNNNGNGNGHNHNNHNNNNNNNNNND) has biased composition (low complexity). The segment covering 622 to 631 (EPSDFSDTED) has biased composition (acidic residues). 2 stretches are compositionally biased toward polar residues: residues 632–642 (NSSTTPNSQYS) and 719–729 (HPISPSNSFDQ). Over residues 872–955 (PTTTTTTGGT…PNSSNTVPNS (84 aa)) the composition is skewed to low complexity. Positions 1066-1101 (IPTVENNQHQQQLQLEQQEKEKEKARLAALEKKKPF) form a coiled coil. Over residues 1082-1106 (QQEKEKEKARLAALEKKKPFPREDS) the composition is skewed to basic and acidic residues. 2 stretches are compositionally biased toward low complexity: residues 1108-1182 (STLI…ATTA) and 1287-1299 (GSQQ…GSQS). Over residues 1300-1311 (APTSPLTPHKNI) the composition is skewed to polar residues. Low complexity-rich tracts occupy residues 1312–1336 (NTNN…MNGS), 1384–1410 (SELL…GENN), and 1446–1470 (AQSS…TNTS). Residues 1556-1629 (IGIKMTERKY…DGQFYYRLKE (74 aa)) enclose the DEP domain. The span at 1645–1668 (TNNNFNNNNTNSNNNQQQQQQQQS) shows a compositional bias: low complexity. Disordered stretches follow at residues 1645–1763 (TNNN…SMSN), 1803–1910 (DEAN…QQQQ), 2122–2145 (NYNN…NLLK), and 2165–2218 (NSDT…KNEM). Positions 1669 to 1702 (IPSVTSSAVNSPNKDSNTPDHSPISSPKQIGNKL) are enriched in polar residues. Low complexity-rich tracts occupy residues 1703–1760 (SSSS…IQSS) and 1807–1848 (GDNN…SSNS). A coiled-coil region spans residues 1791–1821 (LTNKEKDKEKEIDEANGDNNNNNNNNNNNNN). Composition is skewed to polar residues over residues 1849–1871 (GQGS…TNPL) and 1879–1889 (YGSSVQNSNQH). Composition is skewed to low complexity over residues 1890 to 1910 (QQQQ…QQQQ) and 2122 to 2133 (NYNNNNNNNNNN). Basic and acidic residues-rich tracts occupy residues 2166–2181 (SDTE…DNNH) and 2192–2218 (DTDH…KNEM).

The protein in the N-terminal section; belongs to the IML1 family.

This Dictyostelium discoideum (Social amoeba) protein is DEP domain-containing protein DDB_G0279099.